Reading from the N-terminus, the 180-residue chain is NADH-quinone oxidoreductase subunit I (180 aa).

4Fe-4S ferredoxin-type domains lie at 44–74 (LNRYPDGLEKCIGCELCAWACPADAIYVEGA) and 90–119 (RVYQINYLRCIGCGLCIEACPTRALTMTTE). [4Fe-4S] cluster contacts are provided by Cys-54, Cys-57, Cys-60, Cys-64, Cys-99, Cys-102, Cys-105, and Cys-109. A disordered region spans residues 145–180 (MQAPPHDMAPGKTDDDYYLGNVTPITPVPSGTEDAR).

This sequence belongs to the complex I 23 kDa subunit family. NDH-1 is composed of 14 different subunits. Subunits NuoA, H, J, K, L, M, N constitute the membrane sector of the complex. [4Fe-4S] cluster serves as cofactor.

The protein resides in the cell membrane. The enzyme catalyses a quinone + NADH + 5 H(+)(in) = a quinol + NAD(+) + 4 H(+)(out). In terms of biological role, NDH-1 shuttles electrons from NADH, via FMN and iron-sulfur (Fe-S) centers, to quinones in the respiratory chain. The immediate electron acceptor for the enzyme in this species is believed to be menaquinone. Couples the redox reaction to proton translocation (for every two electrons transferred, four hydrogen ions are translocated across the cytoplasmic membrane), and thus conserves the redox energy in a proton gradient. The chain is NADH-quinone oxidoreductase subunit I from Mycolicibacterium smegmatis (strain ATCC 700084 / mc(2)155) (Mycobacterium smegmatis).